Consider the following 1186-residue polypeptide: Pesticidal crystal protein Cry14Aa (1186 aa).

Belongs to the delta endotoxin family.

Promotes colloidosmotic lysis by binding to the midgut epithelial cells of insects. The sequence is that of Pesticidal crystal protein Cry14Aa (cry14Aa) from Bacillus thuringiensis subsp. sotto.